Consider the following 195-residue polypeptide: Fe/S biogenesis protein NfuA (195 aa).

Positions 152 and 155 each coordinate [4Fe-4S] cluster.

It belongs to the NfuA family. In terms of assembly, homodimer. [4Fe-4S] cluster serves as cofactor.

Its function is as follows. Involved in iron-sulfur cluster biogenesis. Binds a 4Fe-4S cluster, can transfer this cluster to apoproteins, and thereby intervenes in the maturation of Fe/S proteins. Could also act as a scaffold/chaperone for damaged Fe/S proteins. This is Fe/S biogenesis protein NfuA from Vibrio cholerae serotype O1 (strain ATCC 39315 / El Tor Inaba N16961).